Consider the following 408-residue polypeptide: LL-diaminopimelate aminotransferase (408 aa).

Residues Tyr-15 and Gly-42 each contribute to the substrate site. Residues Tyr-72, 108 to 109 (SK), Tyr-132, Asn-187, Tyr-218, and 246 to 248 (SFS) each bind pyridoxal 5'-phosphate. The substrate site is built by Lys-109, Tyr-132, and Asn-187. Lys-249 is subject to N6-(pyridoxal phosphate)lysine. 2 residues coordinate pyridoxal 5'-phosphate: Arg-257 and Asn-292. Substrate-binding residues include Asn-292 and Arg-388.

The protein belongs to the class-I pyridoxal-phosphate-dependent aminotransferase family. LL-diaminopimelate aminotransferase subfamily. As to quaternary structure, homodimer. Pyridoxal 5'-phosphate serves as cofactor.

The catalysed reaction is (2S,6S)-2,6-diaminopimelate + 2-oxoglutarate = (S)-2,3,4,5-tetrahydrodipicolinate + L-glutamate + H2O + H(+). It participates in amino-acid biosynthesis; L-lysine biosynthesis via DAP pathway; LL-2,6-diaminopimelate from (S)-tetrahydrodipicolinate (aminotransferase route): step 1/1. Involved in the synthesis of meso-diaminopimelate (m-DAP or DL-DAP), required for both lysine and peptidoglycan biosynthesis. Catalyzes the direct conversion of tetrahydrodipicolinate to LL-diaminopimelate. Is also able to catalyze the reverse reaction in vitro, i.e. the transamination of LL-diaminopimelate with 2-oxoglutarate to produce tetrahydrodipicolinate and glutamate. Cannot use m-DAP, lysine or ornithine as the amino-group donor, when using 2-oxoglutarate as the amino-group acceptor. Cannot use pyruvate, indole 3-pyruvate, oxaloacetate or phenyl pyruvate as the amino-group acceptor, when using LL-DAP as the amino-group donor. This is LL-diaminopimelate aminotransferase from Leptospira interrogans serogroup Icterohaemorrhagiae serovar copenhageni (strain Fiocruz L1-130).